Reading from the N-terminus, the 109-residue chain is MSGVWVFKNGVVRLVEKQQATAGTAVAGGRRKALVHTPSGQVVSSYAALEARLTALGWERYYEDPSLFQFHKRGSLDLISLPADFSAFSSVHMYDIVVKNRDSFRVVDA.

A D-box motif is present at residues 73–81 (RGSLDLISL).

The protein belongs to the FPF1 family. In terms of assembly, interacts with RPT4. In terms of processing, ubiquitinated. RPT4 mediates its proteasome-dependent degradation. Specifically expressed in the apical meristem, the elongation zone of root tip, steles of the branch zone, and the young lateral root. Also expressed in spikes. Expressed in roots and spikes (at protein level).

The protein localises to the cytoplasm. It is found in the nucleus. GTP-binding protein that functions in the development of root systems, which are mediated by auxin. Acts as a cell cycle regulator during root development. Proteasome-mediated degradation of the protein is necessary for the transition of metaphase to anaphase in mitosis. This chain is Flowering-promoting factor 1-like protein 1 (RAA1), found in Oryza sativa subsp. japonica (Rice).